Reading from the N-terminus, the 434-residue chain is Adenylosuccinate synthetase (434 aa).

Residues 22–28 (GDEGKGK) and 50–52 (GHT) contribute to the GTP site. Catalysis depends on Asp-23, which acts as the Proton acceptor. Residues Asp-23 and Gly-50 each contribute to the Mg(2+) site. IMP contacts are provided by residues 23–26 (DEGK), 48–51 (NAGH), Thr-139, Arg-153, Gln-234, Thr-249, and Arg-313. The active-site Proton donor is the His-51. 309–315 (ATTGRKR) provides a ligand contact to substrate. GTP contacts are provided by residues Arg-315, 341 to 343 (KLD), and 423 to 425 (SVG).

The protein belongs to the adenylosuccinate synthetase family. Homodimer. Mg(2+) is required as a cofactor.

It localises to the cytoplasm. The catalysed reaction is IMP + L-aspartate + GTP = N(6)-(1,2-dicarboxyethyl)-AMP + GDP + phosphate + 2 H(+). It functions in the pathway purine metabolism; AMP biosynthesis via de novo pathway; AMP from IMP: step 1/2. Plays an important role in the de novo pathway of purine nucleotide biosynthesis. Catalyzes the first committed step in the biosynthesis of AMP from IMP. This is Adenylosuccinate synthetase from Chlorobium phaeovibrioides (strain DSM 265 / 1930) (Prosthecochloris vibrioformis (strain DSM 265)).